We begin with the raw amino-acid sequence, 177 residues long: Large ribosomal subunit protein uL10 (177 aa).

This sequence belongs to the universal ribosomal protein uL10 family. As to quaternary structure, part of the ribosomal stalk of the 50S ribosomal subunit. The N-terminus interacts with L11 and the large rRNA to form the base of the stalk. The C-terminus forms an elongated spine to which L12 dimers bind in a sequential fashion forming a multimeric L10(L12)X complex.

Its function is as follows. Forms part of the ribosomal stalk, playing a central role in the interaction of the ribosome with GTP-bound translation factors. This chain is Large ribosomal subunit protein uL10, found in Kocuria rhizophila (strain ATCC 9341 / DSM 348 / NBRC 103217 / DC2201).